The sequence spans 311 residues: Glycine--tRNA ligase alpha subunit (311 aa).

The protein belongs to the class-II aminoacyl-tRNA synthetase family. As to quaternary structure, tetramer of two alpha and two beta subunits.

It localises to the cytoplasm. It catalyses the reaction tRNA(Gly) + glycine + ATP = glycyl-tRNA(Gly) + AMP + diphosphate. This is Glycine--tRNA ligase alpha subunit from Brucella anthropi (strain ATCC 49188 / DSM 6882 / CCUG 24695 / JCM 21032 / LMG 3331 / NBRC 15819 / NCTC 12168 / Alc 37) (Ochrobactrum anthropi).